A 156-amino-acid polypeptide reads, in one-letter code: Small ribosomal subunit protein uS7 (156 aa).

It belongs to the universal ribosomal protein uS7 family. Part of the 30S ribosomal subunit. Contacts proteins S9 and S11.

One of the primary rRNA binding proteins, it binds directly to 16S rRNA where it nucleates assembly of the head domain of the 30S subunit. Is located at the subunit interface close to the decoding center, probably blocks exit of the E-site tRNA. This chain is Small ribosomal subunit protein uS7, found in Bordetella bronchiseptica (strain ATCC BAA-588 / NCTC 13252 / RB50) (Alcaligenes bronchisepticus).